A 189-amino-acid polypeptide reads, in one-letter code: MEQIDKQKIADAVKVILEAVGENPEREGLIDTPMRVARMYEEVFSGLKKDPSIHFDTIFAEQHEELVLVKDIRFSSMCEHHLVPFFGVAHVAYLPQNGRVAGLSKLARVVDDVSKRPQLQERITTTVAEIMMDKLKPLGVMVIMEAEHMCMTIRGVNKPGTKTITSAVRGAFKNDDKLRSEVLALIKHN.

Residues C78, H81, and C150 each contribute to the Zn(2+) site.

Belongs to the GTP cyclohydrolase I family. In terms of assembly, toroid-shaped homodecamer, composed of two pentamers of five dimers.

It catalyses the reaction GTP + H2O = 7,8-dihydroneopterin 3'-triphosphate + formate + H(+). It participates in cofactor biosynthesis; 7,8-dihydroneopterin triphosphate biosynthesis; 7,8-dihydroneopterin triphosphate from GTP: step 1/1. The polypeptide is GTP cyclohydrolase 1 (Listeria welshimeri serovar 6b (strain ATCC 35897 / DSM 20650 / CCUG 15529 / CIP 8149 / NCTC 11857 / SLCC 5334 / V8)).